Here is a 215-residue protein sequence, read N- to C-terminus: Adenylate kinase (215 aa).

10–15 is an ATP binding site; the sequence is GAGKGT. Residues 30-58 are NMP; the sequence is STGDMLREAKRSGTLEKRYLDIMDSGGLL. Residues threonine 31, arginine 36, 56-58, 84-87, and glutamine 91 each bind AMP; these read GLL and GFPR. Residues 128 to 158 are LID; the sequence is HRRTDKRSGQIYHLVYNPPPPGAELEHRADD. ATP-binding positions include arginine 129 and 138 to 139; that span reads IY. AMP is bound by residues arginine 155 and arginine 166. Glycine 194 provides a ligand contact to ATP.

The protein belongs to the adenylate kinase family. As to quaternary structure, monomer.

It localises to the cytoplasm. The catalysed reaction is AMP + ATP = 2 ADP. The protein operates within purine metabolism; AMP biosynthesis via salvage pathway; AMP from ADP: step 1/1. In terms of biological role, catalyzes the reversible transfer of the terminal phosphate group between ATP and AMP. Plays an important role in cellular energy homeostasis and in adenine nucleotide metabolism. In Sorangium cellulosum (strain So ce56) (Polyangium cellulosum (strain So ce56)), this protein is Adenylate kinase.